Reading from the N-terminus, the 503-residue chain is Aromatase (503 aa).

2 consecutive transmembrane segments (helical) span residues 19 to 39 (EVVP…LLVW) and 53 to 73 (FLGI…IGSA). 2 residues coordinate substrate: Asp-309 and Met-374. Cys-437 contributes to the heme binding site.

This sequence belongs to the cytochrome P450 family. It depends on heme as a cofactor.

The protein localises to the endoplasmic reticulum membrane. The protein resides in the microsome membrane. The catalysed reaction is testosterone + 3 reduced [NADPH--hemoprotein reductase] + 3 O2 = 17beta-estradiol + formate + 3 oxidized [NADPH--hemoprotein reductase] + 4 H2O + 4 H(+). It catalyses the reaction androst-4-ene-3,17-dione + 3 reduced [NADPH--hemoprotein reductase] + 3 O2 = estrone + formate + 3 oxidized [NADPH--hemoprotein reductase] + 4 H2O + 4 H(+). It carries out the reaction androst-4-ene-3,17-dione + reduced [NADPH--hemoprotein reductase] + O2 = 19-hydroxyandrost-4-ene-3,17-dione + oxidized [NADPH--hemoprotein reductase] + H2O + H(+). The enzyme catalyses 19-hydroxyandrost-4-ene-3,17-dione + reduced [NADPH--hemoprotein reductase] + O2 = 19-oxo-androst-4-ene-3,17-dione + oxidized [NADPH--hemoprotein reductase] + 2 H2O + H(+). The catalysed reaction is 19-oxo-androst-4-ene-3,17-dione + reduced [NADPH--hemoprotein reductase] + O2 = estrone + formate + oxidized [NADPH--hemoprotein reductase] + H2O + 2 H(+). It catalyses the reaction estrone + reduced [NADPH--hemoprotein reductase] + O2 = 2-hydroxyestrone + oxidized [NADPH--hemoprotein reductase] + H2O + H(+). It carries out the reaction 17beta-hydroxy-5alpha-androstan-3-one + reduced [NADPH--hemoprotein reductase] + O2 = 17beta,19-dihydroxy-3-oxo-5alpha-androstanone + oxidized [NADPH--hemoprotein reductase] + H2O + H(+). The enzyme catalyses 17beta,19-dihydroxy-3-oxo-5alpha-androstanone + reduced [NADPH--hemoprotein reductase] + O2 = 17beta-hydroxy-3,19-dioxo-5alpha-androstanone + oxidized [NADPH--hemoprotein reductase] + 2 H2O + H(+). The catalysed reaction is 17beta-hydroxy-3,19-dioxo-5alpha-androstanone + reduced [NADPH--hemoprotein reductase] + O2 = 17beta-hydroxy-3-oxo-19-nor-5alpha-androst-1-ene + formate + oxidized [NADPH--hemoprotein reductase] + H2O + 2 H(+). It functions in the pathway steroid hormone biosynthesis. A cytochrome P450 monooxygenase that catalyzes the conversion of C19 androgens, androst-4-ene-3,17-dione (androstenedione) and testosterone to the C18 estrogens, estrone and estradiol, respectively. Catalyzes three successive oxidations of C19 androgens: two conventional oxidations at C19 yielding 19-hydroxy and 19-oxo/19-aldehyde derivatives, followed by a third oxidative aromatization step that involves C1-beta hydrogen abstraction combined with cleavage of the C10-C19 bond to yield a phenolic A ring and formic acid. Alternatively, the third oxidative reaction yields a 19-norsteroid and formic acid. Converts dihydrotestosterone to delta1,10-dehydro 19-nordihydrotestosterone and may play a role in homeostasis of this potent androgen. Also displays 2-hydroxylase activity toward estrone. Mechanistically, uses molecular oxygen inserting one oxygen atom into a substrate, and reducing the second into a water molecule, with two electrons provided by NADPH via cytochrome P450 reductase (CPR; NADPH-ferrihemoprotein reductase). The protein is Aromatase (CYP19A1) of Bos taurus (Bovine).